The following is a 155-amino-acid chain: Ribosome maturation factor RimP (155 aa).

This sequence belongs to the RimP family.

Its subcellular location is the cytoplasm. In terms of biological role, required for maturation of 30S ribosomal subunits. The polypeptide is Ribosome maturation factor RimP (Prochlorococcus marinus (strain MIT 9301)).